The following is a 344-amino-acid chain: Sulfate/thiosulfate import ATP-binding protein CysA (344 aa).

Residues 3 to 237 (IEVRNLVKKF…PATAFVHGFI (235 aa)) form the ABC transporter domain. 35–42 (GPSGSGKT) is an ATP binding site.

The protein belongs to the ABC transporter superfamily. Sulfate/tungstate importer (TC 3.A.1.6) family. As to quaternary structure, the complex is composed of two ATP-binding proteins (CysA), two transmembrane proteins (CysT and CysW) and a solute-binding protein (CysP).

Its subcellular location is the cell inner membrane. The catalysed reaction is sulfate(out) + ATP + H2O = sulfate(in) + ADP + phosphate + H(+). It carries out the reaction thiosulfate(out) + ATP + H2O = thiosulfate(in) + ADP + phosphate + H(+). In terms of biological role, part of the ABC transporter complex CysAWTP involved in sulfate/thiosulfate import. Responsible for energy coupling to the transport system. In Bradyrhizobium diazoefficiens (strain JCM 10833 / BCRC 13528 / IAM 13628 / NBRC 14792 / USDA 110), this protein is Sulfate/thiosulfate import ATP-binding protein CysA.